Reading from the N-terminus, the 439-residue chain is Methylenetetrahydrofolate--tRNA-(uracil-5-)-methyltransferase TrmFO (439 aa).

Position 8–13 (8–13 (GGGLAG)) interacts with FAD.

Belongs to the MnmG family. TrmFO subfamily. It depends on FAD as a cofactor.

The protein resides in the cytoplasm. It carries out the reaction uridine(54) in tRNA + (6R)-5,10-methylene-5,6,7,8-tetrahydrofolate + NADH + H(+) = 5-methyluridine(54) in tRNA + (6S)-5,6,7,8-tetrahydrofolate + NAD(+). The enzyme catalyses uridine(54) in tRNA + (6R)-5,10-methylene-5,6,7,8-tetrahydrofolate + NADPH + H(+) = 5-methyluridine(54) in tRNA + (6S)-5,6,7,8-tetrahydrofolate + NADP(+). Its function is as follows. Catalyzes the folate-dependent formation of 5-methyl-uridine at position 54 (M-5-U54) in all tRNAs. The polypeptide is Methylenetetrahydrofolate--tRNA-(uracil-5-)-methyltransferase TrmFO (Dictyoglomus thermophilum (strain ATCC 35947 / DSM 3960 / H-6-12)).